A 121-amino-acid chain; its full sequence is UPF0102 protein Strop_1320 (121 aa).

It belongs to the UPF0102 family.

This chain is UPF0102 protein Strop_1320, found in Salinispora tropica (strain ATCC BAA-916 / DSM 44818 / JCM 13857 / NBRC 105044 / CNB-440).